Here is a 603-residue protein sequence, read N- to C-terminus: MKSSLDFLNNFIQRDAVKKLESINNYPLIEFLNSVVKLCEPDSVYLITGSDEEKEYIRKKALESKEEIRLQTSGHTIHFDHPLDQARAREDTFILSDTKIPYVNTKPRNEGLSEMLTLLKGSMRGREMYVGFYSLGPRNSPFQILAVQVTDSPYVIHSENILYRIAFEDFSNNTKFLRFVHSKGEPDIKKRRIMIDLANNTVYSVNTTYAGNSVGLKKLALRLTIMKAVEEGWLSEHMAIVGFNGDKGIHYFTASFPSGSGKTSTSMIGNLISDDLAFIREFEGLPKAVNPEIGVFGIIQGINARDDPIIWEVLHKPGEVIFSNVLMTEDGDVYWEGSELPKPERGYNHEGRWDRESGKPASHPNARFTVPLTSFSNLDKNWDNPNGVIIDGIIFGVRDYSTLVPVVEAFSWSHGVITIGASMESARTSAVIGKSDELEFNPMAILDFMPISLSRYLRNYLNFGKRLRKSPKIFGFNYFLKDDNKFLNSKEDKKVWVSWAVKRVEETANAIYTPIGLIPFYEDLKALFKRVLGKEYGKEEYEKQFTIKLRKYLEKTERIIEIYLKFEDIPSEVINELKMQKERIVDYINKYGDSVSPFRLEKD.

Substrate contacts are provided by residues Arg-87 and 209 to 211 (YAG). Mn(2+) is bound by residues Lys-218 and His-237. Position 258 (Ser-258) interacts with substrate. GTP is bound at residue 259–264 (GSGKTS). Ser-260 is a catalytic residue. A Mn(2+)-binding site is contributed by Asp-275. Residue 365 to 367 (NAR) participates in substrate binding. Residues Arg-367 and Arg-398 each coordinate GTP.

It belongs to the phosphoenolpyruvate carboxykinase [GTP] family. It depends on Mn(2+) as a cofactor.

It is found in the cytoplasm. The catalysed reaction is oxaloacetate + GTP = phosphoenolpyruvate + GDP + CO2. It participates in carbohydrate biosynthesis; gluconeogenesis. Its function is as follows. Catalyzes the conversion of oxaloacetate (OAA) to phosphoenolpyruvate (PEP), the rate-limiting step in the metabolic pathway that produces glucose from lactate and other precursors derived from the citric acid cycle. The sequence is that of Phosphoenolpyruvate carboxykinase [GTP] from Saccharolobus solfataricus (strain ATCC 35092 / DSM 1617 / JCM 11322 / P2) (Sulfolobus solfataricus).